The following is a 381-amino-acid chain: Protein COS1 (381 aa).

Topologically, residues 1–42 are cytoplasmic; that stretch reads MKENELKNEKSVDVLSFKQLESQKIVLPQDLFRSSFTWFCYE. The helical transmembrane segment at 43 to 63 threads the bilayer; that stretch reads IYKSLAFRIWMLLWLPLSVWW. The Extracellular portion of the chain corresponds to 64–72; that stretch reads KLSNNCIYP. A helical transmembrane segment spans residues 73–93; sequence LIVSLLVLFLGPIFVLVICGL. Topologically, residues 94–231 are cytoplasmic; that stretch reads SRKRSLSKQL…YRFKLTWFLK (138 aa). A helical transmembrane segment spans residues 232–252; that stretch reads RISNIFMLIPFLNFLCCIYVS. Residues 253 to 254 lie on the Extracellular side of the membrane; that stretch reads RG. Residues 255–275 form a helical membrane-spanning segment; that stretch reads MCLLLRTFYLGWILFMLVQGF. At 276–381 the chain is on the cytoplasmic side; sequence QNMRMIVLSV…QLSCSEESLA (106 aa).

Belongs to the DUP/COS family.

The protein localises to the membrane. In Saccharomyces cerevisiae (strain ATCC 204508 / S288c) (Baker's yeast), this protein is Protein COS1 (COS1).